The chain runs to 250 residues: 1-(5-phosphoribosyl)-5-[(5-phosphoribosylamino)methylideneamino] imidazole-4-carboxamide isomerase (250 aa).

The active-site Proton acceptor is the Asp8. The active-site Proton donor is the Asp131.

The protein belongs to the HisA/HisF family.

The protein resides in the cytoplasm. It carries out the reaction 1-(5-phospho-beta-D-ribosyl)-5-[(5-phospho-beta-D-ribosylamino)methylideneamino]imidazole-4-carboxamide = 5-[(5-phospho-1-deoxy-D-ribulos-1-ylimino)methylamino]-1-(5-phospho-beta-D-ribosyl)imidazole-4-carboxamide. The protein operates within amino-acid biosynthesis; L-histidine biosynthesis; L-histidine from 5-phospho-alpha-D-ribose 1-diphosphate: step 4/9. This Paraburkholderia phytofirmans (strain DSM 17436 / LMG 22146 / PsJN) (Burkholderia phytofirmans) protein is 1-(5-phosphoribosyl)-5-[(5-phosphoribosylamino)methylideneamino] imidazole-4-carboxamide isomerase.